The sequence spans 49 residues: Large ribosomal subunit protein bL33A (49 aa).

The protein belongs to the bacterial ribosomal protein bL33 family.

The protein is Large ribosomal subunit protein bL33A of Mycoplasmopsis agalactiae (strain NCTC 10123 / CIP 59.7 / PG2) (Mycoplasma agalactiae).